Here is a 210-residue protein sequence, read N- to C-terminus: Guanylate kinase (210 aa).

The Guanylate kinase-like domain occupies glycine 23 to valine 203. Glycine 30–serine 37 contacts ATP.

It belongs to the guanylate kinase family.

It localises to the cytoplasm. It carries out the reaction GMP + ATP = GDP + ADP. Essential for recycling GMP and indirectly, cGMP. The sequence is that of Guanylate kinase (gmk) from Mycobacterium leprae (strain TN).